Here is a 139-residue protein sequence, read N- to C-terminus: MIDFDNRTSLNLHIEVIEQIASSLTNKEIELIVTDKDEMREINSAHRNIDKATDVLSFPYIEMPLSPLGSIVICSLHVEEKSKEFGHTLNDEFALLFIHGLLHLLGYDHEVDSGEMREEEARIIKEFNLPQSLIVRSEG.

Residues His-99, His-103, and His-109 each coordinate Zn(2+).

Belongs to the endoribonuclease YbeY family. Zn(2+) is required as a cofactor.

The protein resides in the cytoplasm. Single strand-specific metallo-endoribonuclease involved in late-stage 70S ribosome quality control and in maturation of the 3' terminus of the 16S rRNA. This chain is Endoribonuclease YbeY, found in Sulfurimonas denitrificans (strain ATCC 33889 / DSM 1251) (Thiomicrospira denitrificans (strain ATCC 33889 / DSM 1251)).